We begin with the raw amino-acid sequence, 415 residues long: Packaging protein 3 (415 aa).

The tract at residues 1–55 (MHPVLRQMRPPPQQRQEQEQRQTCRAPSPPPTASGGATSAVDAAADGDYEPPRRR) is disordered. Residues 1–173 (MHPVLRQMRP…VNQEINFQKS (173 aa)) are interaction with packaging protein 1. 2 positions are modified to phosphoserine; by host: S75 and S360. Positions 381 to 394 (GAGPGLAVAPARAG) are enriched in low complexity. Positions 381-415 (GAGPGLAVAPARAGNVGGVEEYDEDDEYEPEDGEY) are disordered. A compositionally biased stretch (acidic residues) spans 400–415 (EEYDEDDEYEPEDGEY).

It belongs to the adenoviridae packaging protein 3 family. Part of the genome packaging complex composed of packaging proteins 1, 2 and 3; this complex specifically binds to the packaging sequence on the left end of viral genomic DNA and performs packaging of the viral genome. Interacts with hexon-linking protein IIIa; this interaction is required to promote correct genome packaging. Cleaved at different sites by the viral protease during virion maturation.

It is found in the host nucleus. Functionally, involved in viral genome packaging through its interaction with packaging proteins 1 and 2. After proteolytic cleavage by adenovirus protease, L1 52/55k protein is removed from the capsid during viral maturation. The protein is Packaging protein 3 of Homo sapiens (Human).